Consider the following 350-residue polypeptide: Adenine DNA glycosylase (350 aa).

Catalysis depends on Glu37, which acts as the Proton donor/acceptor. The [4Fe-4S] cluster site is built by Cys192, Cys199, Cys202, and Cys208.

The protein belongs to the Nth/MutY family. Monomer. [4Fe-4S] cluster serves as cofactor.

It catalyses the reaction Hydrolyzes free adenine bases from 7,8-dihydro-8-oxoguanine:adenine mismatched double-stranded DNA, leaving an apurinic site.. In terms of biological role, adenine glycosylase active on G-A mispairs. MutY also corrects error-prone DNA synthesis past GO lesions which are due to the oxidatively damaged form of guanine: 7,8-dihydro-8-oxoguanine (8-oxo-dGTP). The polypeptide is Adenine DNA glycosylase (mutY) (Escherichia coli (strain K12)).